The primary structure comprises 148 residues: 1,4-dihydroxy-2-naphthoyl-CoA hydrolase (148 aa).

Residue Asp-15 is part of the active site.

Belongs to the 4-hydroxybenzoyl-CoA thioesterase family. DHNA-CoA hydrolase subfamily.

It carries out the reaction 1,4-dihydroxy-2-naphthoyl-CoA + H2O = 1,4-dihydroxy-2-naphthoate + CoA + H(+). It participates in cofactor biosynthesis; phylloquinone biosynthesis. Its pathway is quinol/quinone metabolism; 1,4-dihydroxy-2-naphthoate biosynthesis; 1,4-dihydroxy-2-naphthoate from chorismate: step 7/7. Functionally, catalyzes the hydrolysis of 1,4-dihydroxy-2-naphthoyl-CoA (DHNA-CoA) to 1,4-dihydroxy-2-naphthoate (DHNA), a reaction involved in phylloquinone (vitamin K1) biosynthesis. The sequence is that of 1,4-dihydroxy-2-naphthoyl-CoA hydrolase from Nostoc sp. (strain PCC 7120 / SAG 25.82 / UTEX 2576).